Reading from the N-terminus, the 278-residue chain is ATP synthase subunit delta (278 aa).

Belongs to the ATPase delta chain family. In terms of assembly, F-type ATPases have 2 components, F(1) - the catalytic core - and F(0) - the membrane proton channel. F(1) has five subunits: alpha(3), beta(3), gamma(1), delta(1), epsilon(1). F(0) has three main subunits: a(1), b(2) and c(10-14). The alpha and beta chains form an alternating ring which encloses part of the gamma chain. F(1) is attached to F(0) by a central stalk formed by the gamma and epsilon chains, while a peripheral stalk is formed by the delta and b chains.

It is found in the cell membrane. F(1)F(0) ATP synthase produces ATP from ADP in the presence of a proton or sodium gradient. F-type ATPases consist of two structural domains, F(1) containing the extramembraneous catalytic core and F(0) containing the membrane proton channel, linked together by a central stalk and a peripheral stalk. During catalysis, ATP synthesis in the catalytic domain of F(1) is coupled via a rotary mechanism of the central stalk subunits to proton translocation. Functionally, this protein is part of the stalk that links CF(0) to CF(1). It either transmits conformational changes from CF(0) to CF(1) or is implicated in proton conduction. The polypeptide is ATP synthase subunit delta (Bifidobacterium longum subsp. infantis (strain ATCC 15697 / DSM 20088 / JCM 1222 / NCTC 11817 / S12)).